The following is a 224-amino-acid chain: Ribonuclease 3 (224 aa).

An RNase III domain is found at 4–127 (IEKLEQSLTY…IIGAIHLEAG (124 aa)). E40 lines the Mg(2+) pocket. D44 is a catalytic residue. The Mg(2+) site is built by D113 and E116. The active site involves E116. The DRBM domain maps to 154–223 (DYKTKLQEIT…AKIALEKLGA (70 aa)).

The protein belongs to the ribonuclease III family. In terms of assembly, homodimer. It depends on Mg(2+) as a cofactor.

It is found in the cytoplasm. It carries out the reaction Endonucleolytic cleavage to 5'-phosphomonoester.. Functionally, digests double-stranded RNA. Involved in the processing of primary rRNA transcript to yield the immediate precursors to the large and small rRNAs (23S and 16S). Also processes some mRNAs, and tRNAs when they are encoded in the rRNA operon. CRISPR (clustered regularly interspaced short palindromic repeat) is an adaptive immune system that provides protection against mobile genetic elements (viruses, transposable elements and conjugative plasmids). CRISPR clusters contain spacers, sequences complementary to antecedent mobile elements, and target invading nucleic acids. CRISPR clusters are transcribed and processed into CRISPR RNA (crRNA). In this organism endogenous ribonuclease 3 and Cas9 are required for correct coprocessing of pre-crRNA and the trans-encoded small RNA (tracrRNA). Cas9, crRNA and tracrRNA are required for cleavage of invading DNA. Complements pre-crRNA and tracrRNA coprocessing defects in an rnc deletion in S.pyogenes strain 370. The chain is Ribonuclease 3 from Campylobacter jejuni subsp. jejuni serotype O:2 (strain ATCC 700819 / NCTC 11168).